The primary structure comprises 120 residues: ATP-dependent Clp protease adapter protein ClpS (120 aa).

Residues 1–20 (MATKSPVNPKVPLVQEPDRD) are disordered.

This sequence belongs to the ClpS family. As to quaternary structure, binds to the N-terminal domain of the chaperone ClpA.

Its function is as follows. Involved in the modulation of the specificity of the ClpAP-mediated ATP-dependent protein degradation. The protein is ATP-dependent Clp protease adapter protein ClpS of Albidiferax ferrireducens (strain ATCC BAA-621 / DSM 15236 / T118) (Rhodoferax ferrireducens).